A 463-amino-acid chain; its full sequence is Sugar transporter ERD6-like 7 (463 aa).

A run of 12 helical transmembrane segments spans residues 26–46 (WMVYLSTFVAVCGSFAFGSCA), 69–89 (LFGSLLTFGAMIGAITSGPIA), 103–123 (AFCVVGWLAIIFAKGVVALDL), 126–146 (LATGYGMGAFSYVVPIFIAEI), 157–177 (TLNQILICTGVSVSFIIGTLV), 181–201 (VLALIGIIPCAASFLGLFFIP), 264–284 (VLIAFGLMVFQQFGGINGICF), 299–319 (LGMIIYAVLQVVITALNAPIV), 327–347 (LLLVSATGLVIGCLIAAVSFY), 357–377 (AVPVLAVVGIMVYIGSFSAGM), 396–416 (VAGGMATLVNWFGAWAVSYTF), and 426–446 (GTFLIYAAINALAIVFVIAIV).

The protein belongs to the major facilitator superfamily. Sugar transporter (TC 2.A.1.1) family.

Its subcellular location is the membrane. In terms of biological role, sugar transporter. In Arabidopsis thaliana (Mouse-ear cress), this protein is Sugar transporter ERD6-like 7.